We begin with the raw amino-acid sequence, 412 residues long: DNA polymerase IV (412 aa).

The UmuC domain occupies 12 to 193; that stretch reads ILHVDMNCFF…LPVGAMHGIG (182 aa). 2 residues coordinate Mg(2+): D16 and D112. Residue E113 is part of the active site. The tract at residues 235 to 257 is disordered; that stretch reads KGMDDREVDPSQMGQHKSVGNSM. Residues 246 to 257 are compositionally biased toward polar residues; sequence QMGQHKSVGNSM.

The protein belongs to the DNA polymerase type-Y family. As to quaternary structure, monomer. Mg(2+) serves as cofactor.

The protein localises to the cytoplasm. The enzyme catalyses DNA(n) + a 2'-deoxyribonucleoside 5'-triphosphate = DNA(n+1) + diphosphate. Poorly processive, error-prone DNA polymerase involved in untargeted mutagenesis. Copies undamaged DNA at stalled replication forks, which arise in vivo from mismatched or misaligned primer ends. These misaligned primers can be extended by PolIV. Exhibits no 3'-5' exonuclease (proofreading) activity. May be involved in translesional synthesis, in conjunction with the beta clamp from PolIII. This chain is DNA polymerase IV, found in Bacillus anthracis.